Consider the following 314-residue polypeptide: 4-hydroxy-3-methylbut-2-enyl diphosphate reductase (314 aa).

Cys-12 provides a ligand contact to [4Fe-4S] cluster. Residues His-41 and His-74 each coordinate (2E)-4-hydroxy-3-methylbut-2-enyl diphosphate. 2 residues coordinate dimethylallyl diphosphate: His-41 and His-74. Isopentenyl diphosphate contacts are provided by His-41 and His-74. Residue Cys-96 coordinates [4Fe-4S] cluster. Position 124 (His-124) interacts with (2E)-4-hydroxy-3-methylbut-2-enyl diphosphate. His-124 lines the dimethylallyl diphosphate pocket. His-124 contributes to the isopentenyl diphosphate binding site. Catalysis depends on Glu-126, which acts as the Proton donor. Thr-167 is a (2E)-4-hydroxy-3-methylbut-2-enyl diphosphate binding site. Cys-197 is a binding site for [4Fe-4S] cluster. (2E)-4-hydroxy-3-methylbut-2-enyl diphosphate is bound by residues Ser-225, Ser-226, Asn-227, and Ser-269. The dimethylallyl diphosphate site is built by Ser-225, Ser-226, Asn-227, and Ser-269. Residues Ser-225, Ser-226, Asn-227, and Ser-269 each coordinate isopentenyl diphosphate.

Belongs to the IspH family. The cofactor is [4Fe-4S] cluster.

It catalyses the reaction isopentenyl diphosphate + 2 oxidized [2Fe-2S]-[ferredoxin] + H2O = (2E)-4-hydroxy-3-methylbut-2-enyl diphosphate + 2 reduced [2Fe-2S]-[ferredoxin] + 2 H(+). It carries out the reaction dimethylallyl diphosphate + 2 oxidized [2Fe-2S]-[ferredoxin] + H2O = (2E)-4-hydroxy-3-methylbut-2-enyl diphosphate + 2 reduced [2Fe-2S]-[ferredoxin] + 2 H(+). Its pathway is isoprenoid biosynthesis; dimethylallyl diphosphate biosynthesis; dimethylallyl diphosphate from (2E)-4-hydroxy-3-methylbutenyl diphosphate: step 1/1. The protein operates within isoprenoid biosynthesis; isopentenyl diphosphate biosynthesis via DXP pathway; isopentenyl diphosphate from 1-deoxy-D-xylulose 5-phosphate: step 6/6. In terms of biological role, catalyzes the conversion of 1-hydroxy-2-methyl-2-(E)-butenyl 4-diphosphate (HMBPP) into a mixture of isopentenyl diphosphate (IPP) and dimethylallyl diphosphate (DMAPP). Acts in the terminal step of the DOXP/MEP pathway for isoprenoid precursor biosynthesis. In Glaesserella parasuis serovar 5 (strain SH0165) (Haemophilus parasuis), this protein is 4-hydroxy-3-methylbut-2-enyl diphosphate reductase.